The sequence spans 350 residues: B1 bradykinin receptor (350 aa).

The Extracellular portion of the chain corresponds to 1-41 (MASRAPLELLPLNRSQLSPPNATTCDDAPEAWDLLHRVLPS). Asparagine 13 and asparagine 21 each carry an N-linked (GlcNAc...) asparagine glycan. The chain crosses the membrane as a helical span at residues 42–62 (VIIIICVCGLLGNLLVLAVLL). Topologically, residues 63–72 (RPRRRLNVAE) are cytoplasmic. The helical transmembrane segment at 73–93 (MYLANLAASDLVFVLGLPFWA) threads the bilayer. Topologically, residues 94–110 (ANISNQFRWPFGGLLCR) are extracellular. Asparagine 95 carries an N-linked (GlcNAc...) asparagine glycan. A disulfide bridge connects residues cysteine 109 and cysteine 186. A helical transmembrane segment spans residues 111–131 (LVNGVIKANLFISIFLVVAIS). The Cytoplasmic portion of the chain corresponds to 132 to 150 (RDRYRALVHPMATRRRRQA). Residues 151-171 (RATCVLIWVAGSLLSVPTFLF) form a helical membrane-spanning segment. Residues 172 to 204 (RSIEAVPELNNDSACVLLHPPGAWHVARMVELN) are Extracellular-facing. N-linked (GlcNAc...) asparagine glycosylation is present at asparagine 182. Residues 205–225 (VLGFLLPLAAIVFFNCHILAS) form a helical membrane-spanning segment. The Cytoplasmic portion of the chain corresponds to 226-248 (LRGRPEVRGARCGGPPDGRTTAL). Residues 249 to 269 (ILTFVAAFLVCWTPYHFFAFL) traverse the membrane as a helical segment. Residues 270 to 292 (EFLTQVQVVRGCFWENFKDLGLQ) lie on the Extracellular side of the membrane. A helical membrane pass occupies residues 293–313 (YASFFAFINSCLNPVIYVFVG). The Cytoplasmic portion of the chain corresponds to 314 to 350 (RLFRTRVWDLFKQCAPRRPPAVSWSHRKRVLQLFWQN). Cysteine 327 is lipidated: S-palmitoyl cysteine.

Belongs to the G-protein coupled receptor 1 family. Bradykinin receptor subfamily. BDKRB1 sub-subfamily.

Its subcellular location is the cell membrane. This is a receptor for bradykinin. Could be a factor in chronic pain and inflammation. The polypeptide is B1 bradykinin receptor (BDKRB1) (Canis lupus familiaris (Dog)).